The primary structure comprises 215 residues: Imidazole glycerol phosphate synthase subunit HisH (215 aa).

One can recognise a Glutamine amidotransferase type-1 domain in the interval 9–215; the sequence is EVVLVDYGLG…QNFVDYCLER (207 aa). Catalysis depends on C85, which acts as the Nucleophile. Catalysis depends on residues H193 and E195.

In terms of assembly, heterodimer of HisH and HisF.

Its subcellular location is the cytoplasm. The enzyme catalyses 5-[(5-phospho-1-deoxy-D-ribulos-1-ylimino)methylamino]-1-(5-phospho-beta-D-ribosyl)imidazole-4-carboxamide + L-glutamine = D-erythro-1-(imidazol-4-yl)glycerol 3-phosphate + 5-amino-1-(5-phospho-beta-D-ribosyl)imidazole-4-carboxamide + L-glutamate + H(+). The catalysed reaction is L-glutamine + H2O = L-glutamate + NH4(+). It participates in amino-acid biosynthesis; L-histidine biosynthesis; L-histidine from 5-phospho-alpha-D-ribose 1-diphosphate: step 5/9. Its function is as follows. IGPS catalyzes the conversion of PRFAR and glutamine to IGP, AICAR and glutamate. The HisH subunit catalyzes the hydrolysis of glutamine to glutamate and ammonia as part of the synthesis of IGP and AICAR. The resulting ammonia molecule is channeled to the active site of HisF. The chain is Imidazole glycerol phosphate synthase subunit HisH from Natronomonas pharaonis (strain ATCC 35678 / DSM 2160 / CIP 103997 / JCM 8858 / NBRC 14720 / NCIMB 2260 / Gabara) (Halobacterium pharaonis).